The chain runs to 92 residues: Small ribosomal subunit protein uS19 (92 aa).

The protein belongs to the universal ribosomal protein uS19 family.

Protein S19 forms a complex with S13 that binds strongly to the 16S ribosomal RNA. This Geobacillus sp. (strain WCH70) protein is Small ribosomal subunit protein uS19.